A 205-amino-acid chain; its full sequence is MLTVAIAKGRLLKSFITYLKQANEQELVDALEKRERQLLISVGSIQIVLVKGSDVPIYVEQGVADVGIVGSDILEEGNYTINNLVDLPFGDCHFALAAKPETSSFNKIATSYVKTARAYFEAQGIDVELVKLSGSIELACLVEMVDGIVDIVQTGTTLKSNGLVEKDTIKPINAKLITNKQSYFKKSSEIDAFLSTLEVSLIDHR.

Belongs to the ATP phosphoribosyltransferase family. Short subfamily. In terms of assembly, heteromultimer composed of HisG and HisZ subunits.

The protein localises to the cytoplasm. It catalyses the reaction 1-(5-phospho-beta-D-ribosyl)-ATP + diphosphate = 5-phospho-alpha-D-ribose 1-diphosphate + ATP. Its pathway is amino-acid biosynthesis; L-histidine biosynthesis; L-histidine from 5-phospho-alpha-D-ribose 1-diphosphate: step 1/9. Its function is as follows. Catalyzes the condensation of ATP and 5-phosphoribose 1-diphosphate to form N'-(5'-phosphoribosyl)-ATP (PR-ATP). Has a crucial role in the pathway because the rate of histidine biosynthesis seems to be controlled primarily by regulation of HisG enzymatic activity. This Staphylococcus saprophyticus subsp. saprophyticus (strain ATCC 15305 / DSM 20229 / NCIMB 8711 / NCTC 7292 / S-41) protein is ATP phosphoribosyltransferase.